The sequence spans 284 residues: F-box protein PP2-B13 (284 aa).

One can recognise an F-box domain in the interval 1–44; that stretch reads MMMLPEACVANILAFTSPADAFSSSEVSSVFRLAGDSDFVWEKF.

The protein is F-box protein PP2-B13 (PP2B13) of Arabidopsis thaliana (Mouse-ear cress).